The following is a 419-amino-acid chain: MEASTAAETPTPTVSQRDQWIVESQVFHIYQLFANIPPNAQSIIRPWLCYWIIHSIALLGESIDDDLEDNTVDFLNRCQDPNGGYAGGPGQMPHLATTYAAVNTLITLGGEKSLASINRNKLYGFMRRMKQPNGGFRMHDEGEIDVRACYTAISVASVLNILDDELIKNVGDFILSCQTYEGGLAGEPGSEAHGGYTFCGLAAMILIGEVNRLDLPRLLDWVVFRQGKECGFQGRTNKLVDGCYSFWQGGAVALLQRLHSIIDEQMAEASQFVTVSDAPEEKECLDGTSSHATSHIRHEGMNESCSSDVKNIGYNFISEWRQSEPLFHSIALQQYILLCSQEQDGGLRDKPGKRRDHYHSCYCLSGLSLCQYSWSKRPDSPPLPKVVMGPYSNLLEPIHPLFNVVLDRYREAHEFFSQL.

PFTB repeat units follow at residues 68–109 (EDNT…ITLG), 119–160 (RNKL…SVLN), 167–208 (IKNV…ILIG), 215–256 (LPRL…ALLQ), and 329–371 (SIAL…SLCQ). (2E,6E)-farnesyl diphosphate is bound by residues 193–196 (HGGY) and 235–238 (RTNK). 2 residues coordinate Zn(2+): D241 and C243. 244-247 (YSFW) contacts (2E,6E)-farnesyl diphosphate. H359 contributes to the Zn(2+) binding site.

It belongs to the protein prenyltransferase subunit beta family. Heterodimer of FTA and FTB. The cofactor is Zn(2+).

It catalyses the reaction L-cysteinyl-[protein] + (2E,6E)-farnesyl diphosphate = S-(2E,6E)-farnesyl-L-cysteinyl-[protein] + diphosphate. Its function is as follows. Catalyzes the transfer of a farnesyl moiety from farnesyl diphosphate to a cysteine at the fourth position from the C-terminus of several proteins. The beta subunit FTB is responsible for peptide-binding. This Pisum sativum (Garden pea) protein is Protein farnesyltransferase subunit beta (FTB).